A 117-amino-acid polypeptide reads, in one-letter code: Galanin peptides (117 aa).

An N-terminal signal peptide occupies residues 1-19; the sequence is MQRCAGFLFLSLILCAALS. A propeptide spanning residues 20–30 is cleaved from the precursor; sequence ETFGLVLSAKE. T61 carries the threonine amide modification.

It belongs to the galanin family.

It localises to the secreted. Functionally, endocrine hormone of the central and peripheral nervous systems that binds and activates the G protein-coupled receptors GALR1, GALR2, and GALR3. This small neuropeptide may regulate diverse physiologic functions including contraction of smooth muscle of the gastrointestinal and genitourinary tract, growth hormone and insulin release and adrenal secretion. The sequence is that of Galanin peptides (GAL) from Coturnix japonica (Japanese quail).